The chain runs to 629 residues: tRNA uridine 5-carboxymethylaminomethyl modification enzyme MnmG (629 aa).

13 to 18 lines the FAD pocket; it reads GGGHAG. NAD(+) is bound at residue 273–287; it reads GPRYCPSIEDKIHRF.

It belongs to the MnmG family. Homodimer. Heterotetramer of two MnmE and two MnmG subunits. The cofactor is FAD.

Its subcellular location is the cytoplasm. Its function is as follows. NAD-binding protein involved in the addition of a carboxymethylaminomethyl (cmnm) group at the wobble position (U34) of certain tRNAs, forming tRNA-cmnm(5)s(2)U34. This is tRNA uridine 5-carboxymethylaminomethyl modification enzyme MnmG from Shewanella baltica (strain OS223).